Here is a 940-residue protein sequence, read N- to C-terminus: PTS system glucose-specific EIICBA component (940 aa).

Residues 1–284 (MQIKAQDTGQ…YAPLWYTSAG (284 aa)) form the PTS EIIC type-1; first part domain. The next 5 membrane-spanning stretches (helical) occupy residues 43 to 63 (LMIPIAVLPIAGIFLGVGDAI), 83 to 103 (GGDVVFANLPILFAIAIAITF), 112 to 132 (FSAFVFWAAMNGFMSSLILPF), 175 to 195 (VFGGIIVGALTSVLYKKFYAI), and 209 to 229 (FVPIICFVVAIPVALILLMIW). Residues 285–478 (GSLQEIVNQQ…VNSFRVAVES (194 aa)) are unknown. The PTS EIIC type-1; second part domain occupies 479–630 (LNPAQYSQGK…FNLATPGRGG (152 aa)). Helical transmembrane passes span 487–507 (GKFPFMLFGIPAAGVAMILAA), 515–535 (AASIVGSAAFTSFLTGITEPF), 537–557 (FTFLFLAPWLFYGVHAVLAAV), 564–584 (ILGANVGQTFSGSFIDFILYG), and 598–618 (LVPIIGLFLAAIYFPTFYFLI). The PTS EIIB type-1 domain occupies 661–743 (QIEAGILLQA…QDIIQGKVNW (83 aa)). The active-site Phosphocysteine intermediate; for EIIB activity is Cys683. The region spanning 794-907 (DETFKQKLVG…NPITPFVVMK (114 aa)) is the PTS EIIA type-1 domain. His847 (tele-phosphohistidine intermediate; for EIIA activity) is an active-site residue.

The protein resides in the cell membrane. It carries out the reaction N(pros)-phospho-L-histidyl-[protein] + D-glucose(out) = D-glucose 6-phosphate(in) + L-histidyl-[protein]. The phosphoenolpyruvate-dependent sugar phosphotransferase system (sugar PTS), a major carbohydrate active transport system, catalyzes the phosphorylation of incoming sugar substrates concomitantly with their translocation across the cell membrane. This system is involved in glucose transport. The sequence is that of PTS system glucose-specific EIICBA component (ptsG) from Mycoplasma pneumoniae (strain ATCC 29342 / M129 / Subtype 1) (Mycoplasmoides pneumoniae).